The primary structure comprises 542 residues: 1,3-beta-glucanosyltransferase gas1 (542 aa).

The signal sequence occupies residues 1 to 19 (MKFSILSLAVAGLVGLAKA). N-linked (GlcNAc...) asparagine glycosylation is present at N35. C70 and C99 form a disulfide bridge. A (1,3-beta-D-glucosyl)n-binding site is contributed by Y88. N91 carries N-linked (GlcNAc...) asparagine glycosylation. Residues N156 and E157 each contribute to the (1,3-beta-D-glucosyl)n site. Catalysis depends on E157, which acts as the Proton donor. N161 carries N-linked (GlcNAc...) asparagine glycosylation. The (1,3-beta-D-glucosyl)n site is built by D198 and R203. Disulfide bonds link C212-C345, C230-C261, C367-C419, C376-C439, and C395-C400. A glycan (N-linked (GlcNAc...) asparagine) is linked at N249. E258 acts as the Nucleophile in catalysis. A glycan (N-linked (GlcNAc...) asparagine) is linked at N279. Position 290 (Y290) interacts with (1,3-beta-D-glucosyl)n. Residues N406, N484, N502, and N509 are each glycosylated (N-linked (GlcNAc...) asparagine). Positions 490-515 (MSTSYTSGSGSSNSSGSSSNSSSKSS) are disordered. Residue S516 is the site of GPI-anchor amidated serine attachment. Residues 517-542 (GASSYNLNMVITFLSVVIGGTAVLFI) constitute a propeptide, removed in mature form.

This sequence belongs to the glycosyl hydrolase 72 family. Post-translationally, the GPI-anchor is attached to the protein in the endoplasmic reticulum and serves to target the protein to the cell surface. There, the glucosamine-inositol phospholipid moiety is cleaved off and the GPI-modified mannoprotein is covalently attached via its lipidless GPI glycan remnant to the 1,6-beta-glucan of the outer cell wall layer.

It is found in the secreted. It localises to the cell wall. The protein resides in the membrane. Functionally, splits internally a 1,3-beta-glucan molecule and transfers the newly generated reducing end (the donor) to the non-reducing end of another 1,3-beta-glucan molecule (the acceptor) forming a 1,3-beta linkage, resulting in the elongation of 1,3-beta-glucan chains in the cell wall. The protein is 1,3-beta-glucanosyltransferase gas1 (gas1) of Schizosaccharomyces pombe (strain 972 / ATCC 24843) (Fission yeast).